The chain runs to 283 residues: Acetylglutamate kinase (283 aa).

Residues 64-65 (GG), Arg-86, and Asn-181 contribute to the substrate site.

The protein belongs to the acetylglutamate kinase family. ArgB subfamily.

Its subcellular location is the cytoplasm. The catalysed reaction is N-acetyl-L-glutamate + ATP = N-acetyl-L-glutamyl 5-phosphate + ADP. It participates in amino-acid biosynthesis; L-arginine biosynthesis; N(2)-acetyl-L-ornithine from L-glutamate: step 2/4. Functionally, catalyzes the ATP-dependent phosphorylation of N-acetyl-L-glutamate. The chain is Acetylglutamate kinase from Sulfurovum sp. (strain NBC37-1).